Consider the following 1089-residue polypeptide: Electroneutral sodium bicarbonate exchanger 1 (1089 aa).

At 1–476 (MPAGSNEPDG…DYRDALSLQC (476 aa)) the chain is on the extracellular side. Residues 55–90 (LGRQSHRHHRTHGQKHRRRGGRGKGASQGEEGLEAL) are disordered. Residues 58–76 (QSHRHHRTHGQKHRRRGGR) show a composition bias toward basic residues. The chain crosses the membrane as a helical span at residues 477 to 497 (LASFLFLYCACMSPVITFGGL). Over 498-505 (LGEATEGR) the chain is Cytoplasmic. Residues 506–526 (ISAIESLFGASMTGIAYSLFA) form a helical membrane-spanning segment. Residues 527–563 (GQPLTILGSTGPVLVFEKILFKFCKDYALSYLSLRAL) are Extracellular-facing. The chain crosses the membrane as a helical span at residues 564-584 (IGLWTAFLCIVLVATDASSLV). Topologically, residues 585–593 (CYITRFTEE) are cytoplasmic. Residues 594 to 614 (AFASLICIIFIYEAIEKLIHL) traverse the membrane as a helical segment. The Extracellular segment spans residues 615 to 685 (AETYPIHMHS…EFMGSACGHH (71 aa)). 2 cysteine pairs are disulfide-bonded: Cys634–Cys682 and Cys636–Cys670. A glycan (N-linked (GlcNAc) asparagine) is linked at Asn644. Residues 686 to 706 (GPYTPDVLFWSCILFFATFIV) form a helical membrane-spanning segment. Residues 707–729 (SSTLKTFKTSRYFPTRVRSMVSD) are Cytoplasmic-facing. A helical membrane pass occupies residues 730 to 750 (FAVFLTIFTMVVLDFLIGVPS). The Extracellular segment spans residues 751–776 (PKLQVPNVFKPTRDDRGWFINPIGPN). Residues 777 to 797 (PWWTVIAAIIPALLCTILIFM) traverse the membrane as a helical segment. Over 798–822 (DQQITAVIINRKEHKLKKGCGYHLD) the chain is Cytoplasmic. The helical transmembrane segment at 823 to 843 (LLMVAVMLGVCSIMGLPWFVA) threads the bilayer. The Extracellular segment spans residues 844–879 (ATVLSITHVNSLKLESECSAPGEQPKFLGIREQRVT). A helical transmembrane segment spans residues 880–900 (GLMIFVLMGCSVFMTAVLKFI). Over 901 to 902 (PM) the chain is Cytoplasmic. Residues 903–923 (PVLYGVFLYMGVSSLQGIQFF) form a helical membrane-spanning segment. The Extracellular portion of the chain corresponds to 924–960 (DRLKLFGMPAKHQPDFIYLRHVPLRKVHLFTLVQLTC). The helical transmembrane segment at 961–981 (LVLLWVIKASPAAIVFPMMVL) threads the bilayer. Residues 982 to 1089 (ALVFVRKVMD…GNTKEKSPFN (108 aa)) are Cytoplasmic-facing.

The protein belongs to the anion exchanger (TC 2.A.31) family. In terms of assembly, homodimer. As to expression, expressed in the hippocampal neurons (at protein level). Highly expressed in brain with lower levels in lung, kidney and heart. In the kidney, there is high expression in the inner medulla, localized to the inner medullary collecting duct. In the brain, there seems to be three transcripts each having a different expression pattern. The smaller 3kb transcript has highest expression levels in the thalamus and the largest 9.5kb transcript has highest levels in the substantia nigra. The middle transcript of 4.4kb, which is also the main transcript in kidney, is highly expressed in thalamus. Hence, the highest levels are observed in the thalamus, amygdala and caudate nucleus and very low expression was seen in the corpus callosum.

It is found in the cell membrane. Its subcellular location is the apical cell membrane. The protein localises to the basolateral cell membrane. It localises to the cytoplasmic vesicle. The protein resides in the secretory vesicle. It is found in the synaptic vesicle membrane. The enzyme catalyses 2 hydrogencarbonate(out) + chloride(in) + Na(+)(out) = 2 hydrogencarbonate(in) + chloride(out) + Na(+)(in). Mediates electroneutral sodium- and carbonate-dependent chloride-HCO3(-) exchange with a Na(+):HCO3(-) stoichiometry of 2:1. Plays a major role in pH regulation in neurons. Mediates sodium reabsorption in the renal cortical collecting ducts. The protein is Electroneutral sodium bicarbonate exchanger 1 of Mus musculus (Mouse).